Reading from the N-terminus, the 172-residue chain is Trypsin inhibitor DE-3 (172 aa).

Intrachain disulfides connect C39/C83 and C132/C139.

This sequence belongs to the protease inhibitor I3 (leguminous Kunitz-type inhibitor) family.

Functionally, inhibition of trypsin. The polypeptide is Trypsin inhibitor DE-3 (Erythrina caffra (Kaffir tree)).